A 334-amino-acid chain; its full sequence is Protein-methionine-sulfoxide reductase catalytic subunit MsrP (334 aa).

Positions 1–44 form a signal peptide, tat-type signal; sequence MKKNQFLKESDVTAESVFFMKRRQVLKALGISAAALSLPHAAHA. Mo-molybdopterin contacts are provided by residues Asn88, 91 to 92, Cys146, Thr181, Asn233, Arg238, and 249 to 251; these read YE and GIK.

The protein belongs to the MsrP family. Heterodimer of a catalytic subunit (MsrP) and a heme-binding subunit (MsrQ). Mo-molybdopterin serves as cofactor. Predicted to be exported by the Tat system. The position of the signal peptide cleavage has not been experimentally proven.

It is found in the periplasm. The enzyme catalyses L-methionyl-[protein] + a quinone + H2O = L-methionyl-(S)-S-oxide-[protein] + a quinol. The catalysed reaction is L-methionyl-[protein] + a quinone + H2O = L-methionyl-(R)-S-oxide-[protein] + a quinol. In terms of biological role, part of the MsrPQ system that repairs oxidized periplasmic proteins containing methionine sulfoxide residues (Met-O), using respiratory chain electrons. Thus protects these proteins from oxidative-stress damage caused by reactive species of oxygen and chlorine generated by the host defense mechanisms. MsrPQ is essential for the maintenance of envelope integrity under bleach stress, rescuing a wide series of structurally unrelated periplasmic proteins from methionine oxidation, including the primary periplasmic chaperone SurA and the lipoprotein Pal. The catalytic subunit MsrP is non-stereospecific, being able to reduce both (R-) and (S-) diastereoisomers of methionine sulfoxide. The chain is Protein-methionine-sulfoxide reductase catalytic subunit MsrP from Escherichia coli O9:H4 (strain HS).